A 372-amino-acid polypeptide reads, in one-letter code: Lung adenoma susceptibility protein 2 (372 aa).

The signal sequence occupies residues 1 to 31 (MAKSKTKHRLCSQESSVSALLASCTLSGSNS). S161 is modified (phosphoserine). The segment at 248–268 (KSPVPVNSDDSPQQTSRAKSA) is disordered. The segment covering 255-265 (SDDSPQQTSRA) has biased composition (polar residues).

Its subcellular location is the secreted. Might play a role in cell proliferation. This chain is Lung adenoma susceptibility protein 2 (LAS2), found in Homo sapiens (Human).